A 244-amino-acid polypeptide reads, in one-letter code: Type III pantothenate kinase (244 aa).

ATP is bound at residue 6 to 13; it reads DVGNTRIK. Residues Y87 and 94-97 contribute to the substrate site; that span reads GIDR. D96 functions as the Proton acceptor in the catalytic mechanism. D117 is a K(+) binding site. Position 120 (T120) interacts with ATP. Residue T172 coordinates substrate.

The protein belongs to the type III pantothenate kinase family. As to quaternary structure, homodimer. NH4(+) is required as a cofactor. It depends on K(+) as a cofactor.

The protein localises to the cytoplasm. It catalyses the reaction (R)-pantothenate + ATP = (R)-4'-phosphopantothenate + ADP + H(+). It participates in cofactor biosynthesis; coenzyme A biosynthesis; CoA from (R)-pantothenate: step 1/5. Catalyzes the phosphorylation of pantothenate (Pan), the first step in CoA biosynthesis. This chain is Type III pantothenate kinase, found in Flavobacterium johnsoniae (strain ATCC 17061 / DSM 2064 / JCM 8514 / BCRC 14874 / CCUG 350202 / NBRC 14942 / NCIMB 11054 / UW101) (Cytophaga johnsonae).